Here is a 336-residue protein sequence, read N- to C-terminus: Probable GTPase MT1543 (336 aa).

Residues 67–75 (GVPGVGKST), aspartate 209, and 245–247 (SAV) each bind GTP.

Belongs to the SIMIBI class G3E GTPase family. ArgK/MeaB subfamily. Homodimer.

Probable GTPase. May also bind and hydrolyze ATP. May function as chaperone. The sequence is that of Probable GTPase MT1543 from Mycobacterium tuberculosis (strain CDC 1551 / Oshkosh).